The sequence spans 369 residues: Dual-specificity RNA methyltransferase RlmN (369 aa).

Glutamate 94 acts as the Proton acceptor in catalysis. The Radical SAM core domain occupies 113 to 346 (ESEKWTMCLS…CTIRESRGID (234 aa)). Residues cysteine 120 and cysteine 351 are joined by a disulfide bond. Residues cysteine 127, cysteine 131, and cysteine 134 each contribute to the [4Fe-4S] cluster site. S-adenosyl-L-methionine contacts are provided by residues 177-178 (GE), serine 209, 232-234 (SLH), and asparagine 308. Residue cysteine 351 is the S-methylcysteine intermediate of the active site.

This sequence belongs to the radical SAM superfamily. RlmN family. The cofactor is [4Fe-4S] cluster.

Its subcellular location is the cytoplasm. It carries out the reaction adenosine(2503) in 23S rRNA + 2 reduced [2Fe-2S]-[ferredoxin] + 2 S-adenosyl-L-methionine = 2-methyladenosine(2503) in 23S rRNA + 5'-deoxyadenosine + L-methionine + 2 oxidized [2Fe-2S]-[ferredoxin] + S-adenosyl-L-homocysteine. The catalysed reaction is adenosine(37) in tRNA + 2 reduced [2Fe-2S]-[ferredoxin] + 2 S-adenosyl-L-methionine = 2-methyladenosine(37) in tRNA + 5'-deoxyadenosine + L-methionine + 2 oxidized [2Fe-2S]-[ferredoxin] + S-adenosyl-L-homocysteine. Its function is as follows. Specifically methylates position 2 of adenine 2503 in 23S rRNA and position 2 of adenine 37 in tRNAs. m2A2503 modification seems to play a crucial role in the proofreading step occurring at the peptidyl transferase center and thus would serve to optimize ribosomal fidelity. The sequence is that of Dual-specificity RNA methyltransferase RlmN from Helicobacter hepaticus (strain ATCC 51449 / 3B1).